A 348-amino-acid chain; its full sequence is CCAAT/enhancer-binding protein beta (348 aa).

A required for Lys-174 sumoylation region spans residues 1–24 (MQRLVVWDPVCLPLPPPPPAFKSM). Arg-3 carries the asymmetric dimethylarginine; by CARM1 modification. The tract at residues 24 to 135 (MEVANFYYEA…YGGKNCKKAA (112 aa)) is required for MYC transcriptional repression. N6-acetyllysine; alternate is present on Lys-43. Lys-43 carries the N6-methylated lysine; alternate modification. Disordered stretches follow at residues 44–65 (AAPA…ELGS) and 79–112 (LEPL…ASSG). A compositionally biased stretch (pro residues) spans 47 to 59 (AAPPADRPGPRPP). Residues 116-124 (DFLSDLFSD) carry the 9aaTAD motif. Residues Lys-129 and Lys-132 each carry the N6-acetyllysine; by KAT2A and KAT2B modification. The residue at position 133 (Lys-133) is an N6-acetyllysine; by KAT2A and KAT2B; alternate. Residue Lys-133 forms a Glycyl lysine isopeptide (Lys-Gly) (interchain with G-Cter in SUMO2); alternate linkage. Residues 158 to 178 (APLHPPPPPPPPPAELKAEPG) form a disordered region. Residues 160-171 (LHPPPPPPPPPA) show a composition bias toward pro residues. Lys-174 is covalently cross-linked (Glycyl lysine isopeptide (Lys-Gly) (interchain with G-Cter in SUMO2); alternate). A Glycyl lysine isopeptide (Lys-Gly) (interchain with G-Cter in SUMO); alternate cross-link involves residue Lys-174. Glycyl lysine isopeptide (Lys-Gly) (interchain with G-Cter in SUMO2) cross-links involve residues Lys-185 and Lys-187. The segment covering 219 to 259 (SGSSGSLSTSSSSSPPGTPSPADAKATPAAAACYAGAAPAP) has biased composition (low complexity). The disordered stretch occupies residues 219–277 (SGSSGSLSTSSSSSPPGTPSPADAKATPAAAACYAGAAPAPSQVKSKAKKTVDKHSDEY). Thr-227 is subject to Phosphothreonine; by GSK3-beta. 2 O-linked (GlcNAc) serine glycosylation sites follow: Ser-228 and Ser-229. Residue Ser-232 is modified to Phosphoserine; by GSK3-beta. Position 236 is a phosphothreonine; by RPS6KA1, CDK2 and MAPK (Thr-236). Residues Lys-263 and Lys-265 each participate in a glycyl lysine isopeptide (Lys-Gly) (interchain with G-Cter in SUMO2) cross-link. Basic and acidic residues predominate over residues 268-277 (KTVDKHSDEY). Thr-269 is modified (phosphothreonine; by RPS6KA1 and PKC/PRKCA). The 64-residue stretch at 274–337 (SDEYKIRRER…STLRNLFKTL (64 aa)) folds into the bZIP domain. The segment at 278–298 (KIRRERNNIAVRKSRDKAKMR) is basic motif. Ser-291 is modified (phosphoserine; by PKC/PRKCA). Positions 300-307 (LETQHKVL) are leucine-zipper. The residue at position 328 (Ser-328) is a Phosphoserine; by CaMK2. Lys-335 is covalently cross-linked (Glycyl lysine isopeptide (Lys-Gly) (interchain with G-Cter in SUMO2)).

It belongs to the bZIP family. C/EBP subfamily. As to quaternary structure, binds DNA as a homodimer and as a heterodimer. Interacts with ATF4. Binds DNA as a heterodimer with ATF4. Interacts with MYB; within the complex, MYB and CEBPB bind to different promoter regions. Can form stable heterodimers with CEBPA, CEBPD and CEBPG. Interacts with SIX1. Interacts with TRIM28 and PTGES2. Interacts with PRDM16. Interacts with CCDC85B. Forms a complex with THOC5. Interacts with ZNF638; this interaction increases transcriptional activation. Interacts with CIDEA and CIDEC; these interactions increase transcriptional activation of a subset of CEBPB downstream target genes. Interacts with DDIT3/CHOP. Interacts with EP300; recruits EP300 to chromatin. Interacts with RORA; the interaction disrupts interaction with EP300. Interacts (not methylated) with MED23, MED26, SMARCA2, SMARCB1 and SMARCC1. Interacts with KAT2A and KAT2B. Interacts with ATF5; EP300 is required for ATF5 and CEBPB interaction and DNA binding. Interacts with NFE2L1; the heterodimer represses expression of DSPP during odontoblast differentiation. In terms of processing, methylated. Methylation at Arg-3 by CARM1 and at Lys-43 by EHMT2 inhibit transactivation activity. Methylation is probably inhibited by phosphorylation at Thr-236. Post-translationally, sumoylated by polymeric chains of SUMO2 or SUMO3. Sumoylation at Lys-174 is required for inhibition of T-cells proliferation. In adipocytes, sumoylation at Lys-174 by PIAS1 leads to ubiquitination and subsequent proteasomal degradation. Desumoylated by SENP2, which abolishes ubiquitination and stabilizes protein levels. Ubiquitinated, leading to proteasomal degradation. In terms of processing, phosphorylated at Thr-236 by MAPK and CDK2, serves to prime phosphorylation at Thr-227 and Ser-232 by GSK3B and acquire DNA-binding as well as transactivation activities, required to induce adipogenesis. MAPK and CDK2 act sequentially to maintain Thr-236 in the primed phosphorylated state during mitotical cloning expansion and thereby progression of terminal differentiation. Phosphorylation at Thr-269 enhances transactivation activity. Phosphorylation at Ser-328 in response to calcium increases transactivation activity. Phosphorylated at Thr-236 by RPS6KA1. Post-translationally, O-glycosylated, glycosylation at Ser-228 and Ser-229 prevents phosphorylation on Thr-236, Ser-232 and Thr-227 and DNA binding activity which delays the adipocyte differentiation program. Acetylated. Acetylation at Lys-43 is an important and dynamic regulatory event that contributes to its ability to transactivate target genes, including those associated with adipogenesis and adipocyte function. Deacetylation by HDAC1 represses its transactivation activity. Acetylated by KAT2A and KAT2B within a cluster of lysine residues between amino acids 129-133, this acetylation is strongly induced by glucocorticoid treatment and enhances transactivation activity.

Its subcellular location is the nucleus. The protein resides in the cytoplasm. In terms of biological role, important transcription factor regulating the expression of genes involved in immune and inflammatory responses. Also plays a significant role in adipogenesis, as well as in the gluconeogenic pathway, liver regeneration, and hematopoiesis. The consensus recognition site is 5'-T[TG]NNGNAA[TG]-3'. Its functional capacity is governed by protein interactions and post-translational protein modifications. During early embryogenesis, plays essential and redundant roles with CEBPA. Has a promitotic effect on many cell types such as hepatocytes and adipocytes but has an antiproliferative effect on T-cells by repressing MYC expression, facilitating differentiation along the T-helper 2 lineage. Binds to regulatory regions of several acute-phase and cytokines genes and plays a role in the regulation of acute-phase reaction and inflammation. Also plays a role in intracellular bacteria killing. During adipogenesis, is rapidly expressed and, after activation by phosphorylation, induces CEBPA and PPARG, which turn on the series of adipocyte genes that give rise to the adipocyte phenotype. The delayed transactivation of the CEBPA and PPARG genes by CEBPB appears necessary to allow mitotic clonal expansion and thereby progression of terminal differentiation. Essential for female reproduction because of a critical role in ovarian follicle development. Restricts osteoclastogenesis: together with NFE2L1; represses expression of DSPP during odontoblast differentiation. This chain is CCAAT/enhancer-binding protein beta (CEBPB), found in Bos taurus (Bovine).